The chain runs to 803 residues: Translation initiation factor IF-2 (803 aa).

Disordered stretches follow at residues 93–123 and 138–206; these read TKPV…LNEK and EVKE…ASAK. Polar residues predominate over residues 111-121; that stretch reads VPPTSDTTNLN. Basic and acidic residues predominate over residues 138–155; sequence EVKEEAKKTPSEKKETPK. Residues 156 to 167 show a composition bias toward basic residues; the sequence is KGPRKETRRSRK. The span at 168 to 188 shows a compositional bias: basic and acidic residues; it reads PDKEDKWEREELHMTKLVEER. In terms of domain architecture, tr-type G spans 302-471; that stretch reads PRAPVVTIMG…LLQAEVLELK (170 aa). The tract at residues 311–318 is G1; sequence GHVDHGKT. 311–318 provides a ligand contact to GTP; it reads GHVDHGKT. Residues 336 to 340 form a G2 region; sequence GITQH. The tract at residues 357–360 is G3; it reads DTPG. Residues 357-361 and 411-414 contribute to the GTP site; these read DTPGH and NKID. Positions 411–414 are G4; sequence NKID. The tract at residues 447-449 is G5; that stretch reads SAK.

This sequence belongs to the TRAFAC class translation factor GTPase superfamily. Classic translation factor GTPase family. IF-2 subfamily.

The protein localises to the cytoplasm. One of the essential components for the initiation of protein synthesis. Protects formylmethionyl-tRNA from spontaneous hydrolysis and promotes its binding to the 30S ribosomal subunits. Also involved in the hydrolysis of GTP during the formation of the 70S ribosomal complex. The chain is Translation initiation factor IF-2 from Coxiella burnetii (strain RSA 493 / Nine Mile phase I).